A 357-amino-acid polypeptide reads, in one-letter code: MNTMKRMDCRDLNQSELTQHCAELGLPKFRGRQVFQWVQQKAVQNWEELKNIGAGDRQKLQDGLFLQPLRKVREQISQDGTRKFLFRCADGETLECVLMDYDRRKNRDRHTVCVSTQIGCAVGCAFCATGLGGWRRNLSPGEILGQVLDITYLMRQEDPDFQVTNIVFMGMGEPLLNYEAVLKAIELLNDPEGQGIGMRRMTISTSGVAPKIRQLAKDNPQVGLAVSLHSAHNTTRDQLIPMNRKYPLEELMEACRDYTTLTNRRITFEIALISGQATLEAAQAVGHLLKRQLAHVNLIPVNPVAGTGMARPTAKEVQQFAQCLESMGIPVSVREEKGTDIDAACGQLRRQLECEQK.

Residue E95 is the Proton acceptor of the active site. Residues 106-340 form the Radical SAM core domain; sequence NRDRHTVCVS…VSVREEKGTD (235 aa). A disulfide bridge links C113 with C345. [4Fe-4S] cluster is bound by residues C120, C124, and C127. S-adenosyl-L-methionine-binding positions include 172–173, S204, 227–229, and N302; these read GE and SLH. C345 functions as the S-methylcysteine intermediate in the catalytic mechanism.

This sequence belongs to the radical SAM superfamily. RlmN family. Requires [4Fe-4S] cluster as cofactor.

The protein localises to the cytoplasm. The enzyme catalyses adenosine(2503) in 23S rRNA + 2 reduced [2Fe-2S]-[ferredoxin] + 2 S-adenosyl-L-methionine = 2-methyladenosine(2503) in 23S rRNA + 5'-deoxyadenosine + L-methionine + 2 oxidized [2Fe-2S]-[ferredoxin] + S-adenosyl-L-homocysteine. It catalyses the reaction adenosine(37) in tRNA + 2 reduced [2Fe-2S]-[ferredoxin] + 2 S-adenosyl-L-methionine = 2-methyladenosine(37) in tRNA + 5'-deoxyadenosine + L-methionine + 2 oxidized [2Fe-2S]-[ferredoxin] + S-adenosyl-L-homocysteine. Its function is as follows. Specifically methylates position 2 of adenine 2503 in 23S rRNA and position 2 of adenine 37 in tRNAs. This chain is Probable dual-specificity RNA methyltransferase RlmN, found in Desulfitobacterium hafniense (strain Y51).